The chain runs to 357 residues: Heat-inducible transcription repressor HrcA (357 aa).

It belongs to the HrcA family.

Functionally, negative regulator of class I heat shock genes (grpE-dnaK-dnaJ and groELS operons). Prevents heat-shock induction of these operons. The sequence is that of Heat-inducible transcription repressor HrcA from Anabaena sp. (strain L31).